The chain runs to 223 residues: All-trans retinoic acid-induced differentiation factor (223 aa).

The signal sequence occupies residues 1-25 (MASRESGGSRAAALLLVLGVERALA). Residues 26–193 (LPEICTLCPG…YKCMRQGSFS (168 aa)) are Extracellular-facing. An EGF-like domain is found at 146 to 187 (QRDLCNSTGSPEMCPENGSCASDGPGLLQCVCADGFHGYKCM). Disulfide bonds link C150–C165, C159–C175, and C177–C186. A helical transmembrane segment spans residues 194-214 (LLMFFGILGSTTLAISILLWG). The Cytoplasmic segment spans residues 215-223 (TQRRKAKAS).

Interacts with NELL1; the interaction promotes osteoblastic differentiation and mineralization. Interacts with SLC37A3; the interaction is direct and both proteins are mutually dependent for their stability.

The protein resides in the nucleus envelope. It localises to the cell membrane. It is found in the lysosome membrane. In terms of biological role, promotes osteoblast cell differentiation and terminal mineralization. Plays a role in inducing the cell cycle arrest via inhibiting CCND1 expression in all-trans-retinoic acid (ATRA) signal pathway. In osteoclasts, forms a transporter complex with ATRAID for nitrogen-containing-bisphophonates (N-BPs) required for releasing N-BP molecules that have trafficked to lysosomes through fluid-phase endocytosis into the cytosol. This Mus musculus (Mouse) protein is All-trans retinoic acid-induced differentiation factor (Atraid).